A 140-amino-acid polypeptide reads, in one-letter code: UPF0102 protein alr1796 (140 aa).

It belongs to the UPF0102 family.

This is UPF0102 protein alr1796 from Nostoc sp. (strain PCC 7120 / SAG 25.82 / UTEX 2576).